We begin with the raw amino-acid sequence, 426 residues long: N-formyl-4-amino-5-aminomethyl-2-methylpyrimidine deformylase (426 aa).

A coiled-coil region spans residues 1 to 31 (MDQQIYSLQKKVEEHKEELIQLAKTLISYQT). Position 89 (histidine 89) interacts with Zn(2+). Residue aspartate 91 is part of the active site. Aspartate 122 is a Zn(2+) binding site. Glutamate 156 serves as the catalytic Proton acceptor. Zn(2+)-binding residues include glutamate 157, aspartate 180, and histidine 394.

It belongs to the peptidase M20A family. It depends on Zn(2+) as a cofactor. The cofactor is Co(2+).

The catalysed reaction is N-formyl-4-amino-5-aminomethyl-2-methylpyrimidine + H2O = 4-amino-5-aminomethyl-2-methylpyrimidine + formate. The protein operates within cofactor biosynthesis; thiamine diphosphate biosynthesis. Its function is as follows. Catalyzes the deformylation of the formylaminopyrimidine N-formyl-4-amino-5-aminomethyl-2-methylpyrimidine (FAMP) to give the corresponding aminopyrimidine. This Bacillus subtilis (strain 168) protein is N-formyl-4-amino-5-aminomethyl-2-methylpyrimidine deformylase.